The chain runs to 282 residues: Putative dolichyldiphosphatase (282 aa).

Transmembrane regions (helical) follow at residues 26–46 (LLCA…ATLI) and 93–113 (MPSS…LFLL). A disordered region spans residues 121-153 (QQQQQQQKQKQRERKKQVTNVKTTTTNGSGNGS). A compositionally biased stretch (low complexity) spans 138–148 (VTNVKTTTTNG). The next 2 helical transmembrane spans lie at 173-193 (WSFA…GAVA) and 207-227 (VLVG…VTHV).

The protein belongs to the dolichyldiphosphatase family.

It localises to the endoplasmic reticulum membrane. The enzyme catalyses a di-trans,poly-cis-dolichyl diphosphate + H2O = a di-trans,poly-cis-dolichyl phosphate + phosphate + H(+). Its pathway is protein modification; protein glycosylation. The chain is Putative dolichyldiphosphatase from Neurospora crassa (strain ATCC 24698 / 74-OR23-1A / CBS 708.71 / DSM 1257 / FGSC 987).